A 303-amino-acid chain; its full sequence is Catechol 1,2-dioxygenase (303 aa).

Tyrosine 156, tyrosine 191, histidine 215, and histidine 217 together coordinate Fe cation.

In terms of assembly, homodimer. Requires Fe(3+) as cofactor.

It catalyses the reaction catechol + O2 = cis,cis-muconate + 2 H(+). The protein operates within aromatic compound metabolism; beta-ketoadipate pathway; 5-oxo-4,5-dihydro-2-furylacetate from catechol: step 1/3. Inhibited by Ag(+), Cu(+), Hg(2+) and Pb(2+). Can cleave 4-methylcatechol at lower rates than catechol, but has no activity with 3-methylcatechol, 4-chlorocatechol, 4-carboxycatechol or hydroxyquinol. The polypeptide is Catechol 1,2-dioxygenase (HQD2) (Candida albicans (strain SC5314 / ATCC MYA-2876) (Yeast)).